The primary structure comprises 487 residues: Protein translocase subunit SecY (487 aa).

The Cytoplasmic portion of the chain corresponds to 1 to 20 (MSWKDTAEPLLVRMPAVQRP). The helical transmembrane segment at 21–47 (EGHVPFKRKLTWTGGVLLLYFFLTNVK) threads the bilayer. Residues 48 to 59 (LFGLDIDASQQV) lie on the Extracellular side of the membrane. An intramembrane region (helical) is located at residues 60 to 67 (FGRFSSIL). The chain crosses the membrane as a discontinuously helical span at residues 60–88 (FGRFSSILASGQGSIMQLGIGPIVTASIV). Residues 68 to 79 (ASGQGSIMQLGI) lie within the membrane without spanning it. The segment at residues 80–88 (GPIVTASIV) is an intramembrane region (helical). Residues 89–110 (LQLLGGADLLGLNTQDDPRDQI) are Cytoplasmic-facing. Residues 111–135 (LYQGLQKLLVLVMICLTGLPMVFAG) traverse the membrane as a helical segment. Over 136–153 (GFLPADTAVANSLGIGTA) the chain is Extracellular. The chain crosses the membrane as a helical span at residues 154-178 (GVQWLIFAQMFVGGVLILFMDEVIS). The Cytoplasmic segment spans residues 179–184 (KWGVGS). A helical transmembrane segment spans residues 185–203 (GIGLFIVAGVSQRLVGGLL). Residues 204–244 (TAPFLGNSEGIIYTWYLFITGERGTGPVLAADGLQTVLLQG) are Extracellular-facing. A helical transmembrane segment spans residues 245 to 266 (ELLGLFTTVLIFAVVVYAESVR). Residues 267-291 (VEIPLSNARVKGARGRFPVKLIYAS) are Cytoplasmic-facing. The helical transmembrane segment at 292–313 (VLPMILVRALQANIQFLGRILN) threads the bilayer. Over 314–364 (AQLGSMPAFLGTYANGQPTGGLFYFLAPIQSRGDWMWWLEGTAQPVWQILT) the chain is Extracellular. The helical transmembrane segment at 365-384 (RVGIDLFVMLVGGAVFAVFW) threads the bilayer. Residues 385–427 (VETTDMGPEATAKQIHNSGMQIPGFRQNVGVIEKVLERYIPQV) lie on the Cytoplasmic side of the membrane. A helical transmembrane segment spans residues 428 to 446 (TVIGGALVGLLAVMANMLG). At 447 to 451 (TIGGV) the chain is on the extracellular side. The chain crosses the membrane as a helical span at residues 452–466 (SGTGLLLTVSITYKL). The Cytoplasmic segment spans residues 467–487 (YEEIAEEQLMEMHPMMRQMFG).

Belongs to the SecY/SEC61-alpha family. Component of the Sec protein translocase complex. Heterotrimer consisting of alpha (SecY), beta (SecG) and gamma (SecE) subunits. The heterotrimers can form oligomers, although 1 heterotrimer is thought to be able to translocate proteins. Interacts with the ribosome. May interact with SecDF, and other proteins may be involved.

Its subcellular location is the cell membrane. Functionally, the central subunit of the protein translocation channel SecYEG. Consists of two halves formed by TMs 1-5 and 6-10. These two domains form a lateral gate at the front which open onto the bilayer between TMs 2 and 7, and are clamped together by SecE at the back. The channel is closed by both a pore ring composed of hydrophobic SecY resides and a short helix (helix 2A) on the extracellular side of the membrane which forms a plug. The plug probably moves laterally to allow the channel to open. The ring and the pore may move independently. The polypeptide is Protein translocase subunit SecY (Haloarcula marismortui (strain ATCC 43049 / DSM 3752 / JCM 8966 / VKM B-1809) (Halobacterium marismortui)).